The following is a 331-amino-acid chain: Aldo-keto reductase YhdN (331 aa).

Residues 20–21 (TW) and Asp-52 each bind NADP(+). Tyr-57 acts as the Proton donor in catalysis. NADP(+) contacts are provided by residues Gln-175, 203–208 (YGSLCR), Lys-214, Arg-227, 280–282 (GAR), and Gln-286.

Belongs to the aldo/keto reductase family. Aldo/keto reductase 11 subfamily. Monomer.

Its function is as follows. Aldo-keto reductase (AKR) that displays broad substrate specificity in vitro. Is able to reduce the standard AKR substrates DL-glyceraldehyde, D-erythrose, methylglyoxal, p-nitrobenzaldehyde, benzaldehyde and butyraldehyde, in the presence of NADPH. Cannot use NADH as a cosubstrate. Does not act on glucose, 2-pyridine carboxyaldehyde, fructose and xylose. The physiological function of this enzyme is not clear. May play a role in bacterial stress response and/or in detoxification of reactive aldehydes. The chain is Aldo-keto reductase YhdN (yhdN) from Bacillus subtilis (strain 168).